An 873-amino-acid chain; its full sequence is MASLKMLICVCVAILIPSTLSQDSHGIAGIIDPRDTASMDVGKISFSEAIGSGAPKEPQIRNRIFACSSPTGASVARLAQPRHCHRHADSTNMTEGIAVVFKQNIAPYVFNVTLYYKHITTVTTWALFSRPQITNEYVTRVPIDYHEIVRIDRSGECSSKATYHKNFMFFEAYDNDEAEKKLPLVPSLLRSTVSKAFHTTNFTKRHQTLGYRTSTSVDCVVEYLQARSVYPYDYFGMATGDTVEISPFYTKNTTGPRRHSVYRDYRFLEIANYQVRDLETGQIRPPKKRNFLTDEQFTIGWDAMEEKESVCTLSKWIEVPEAVRVSYKNSYHFSLKDMTMTFSSGKQPFNISRLHLAECVPTIATEAIDGIFARKYSSTHVRSGDIEYYLGSGGFLIAFQKLMSHGLAEMYLEEAQRQNHLPRGRERRQAAGRRTASLQSGPQGDRITTHSSATFAMLQFAYDKIQAHVNELIGNLLEAWCELQNRQLIVWHEMKKLNPNSLMTSLFGQPVSARLLGDIVAVSKCIEIPIENIRMQDSMRMPGDPTMCYTRPVLIFRYSSSPESQFSANSTENHNLDILGQLGEHNEILQGRNLIEPCMINHRRYFLLGENYLLYEDYTFVRQVNASEIEEVSIFINLNATILEDLDFVPVEVYTREELRDTGTLNYDDVVRYQNIYNKRFRDIDTVIRGDRGDAIFRAIADFFGNTLGEVGKALGTVVMTAAAAVISTVSGIASFLSNPFAALGIGIAVVVSIILGLLAFKYVMNLKSNPVQVLFPGAVPPAGTPPRPSRRYYKDEEEVEEDSDEDDRILATRVLKGLELLHKDEQKARRQKARFSAFAKNMRNLFRRKPRTKEDDYPLLEYPSWAEESEDE.

An N-terminal signal peptide occupies residues 1–21 (MASLKMLICVCVAILIPSTLS). The Virion surface portion of the chain corresponds to 22 to 740 (QDSHGIAGII…SGIASFLSNP (719 aa)). Disulfide bonds link Cys67–Cys525, Cys84–Cys481, Cys157–Cys219, Cys311–Cys359, and Cys548–Cys598. N-linked (GlcNAc...) asparagine; by host glycosylation is found at Asn92 and Asn111. Residues 124-130 (TWALFSR) form an involved in fusion and/or binding to host membrane region. N-linked (GlcNAc...) asparagine; by host glycosylation is present at Asn201. The interval 206–213 (HQTLGYRT) is involved in fusion and/or binding to host membrane. 2 N-linked (GlcNAc...) asparagine; by host glycosylation sites follow: Asn252 and Asn350. The tract at residues 418–447 (QNHLPRGRERRQAAGRRTASLQSGPQGDRI) is disordered. Asn569, Asn625, and Asn639 each carry an N-linked (GlcNAc...) asparagine; by host glycan. Hydrophobic membrane proximal region regions lie at residues 684 to 738 (IDTV…SFLS) and 715 to 734 (LGTV…SGIA). A helical membrane pass occupies residues 741–761 (FAALGIGIAVVVSIILGLLAF). Residues 762–873 (KYVMNLKSNP…PSWAEESEDE (112 aa)) are Intravirion-facing. The segment at 781 to 807 (PPAGTPPRPSRRYYKDEEEVEEDSDED) is disordered. The segment covering 796–807 (DEEEVEEDSDED) has biased composition (acidic residues). The short motif at 858–861 (YPLL) is the Internalization motif element.

It belongs to the herpesviridae glycoprotein B family. Homotrimer; disulfide-linked. Binds to heparan sulfate proteoglycans. Interacts with gH/gL heterodimer. Post-translationally, a proteolytic cleavage by host furin generates two subunits that remain linked by disulfide bonds.

It is found in the virion membrane. It localises to the host cell membrane. Its subcellular location is the host endosome membrane. The protein localises to the host Golgi apparatus membrane. Its function is as follows. Envelope glycoprotein that forms spikes at the surface of virion envelope. Essential for the initial attachment to heparan sulfate moieties of the host cell surface proteoglycans. Involved in fusion of viral and cellular membranes leading to virus entry into the host cell. Following initial binding to its host receptors, membrane fusion is mediated by the fusion machinery composed at least of gB and the heterodimer gH/gL. May be involved in the fusion between the virion envelope and the outer nuclear membrane during virion egress. This is Envelope glycoprotein B from Infectious laryngotracheitis virus (strain 632) (ILTV).